We begin with the raw amino-acid sequence, 179 residues long: uncharacterized protein (179 aa).

This is an uncharacterized protein from Sulfolobus islandicus rod-shaped virus 1 (SIRV-1).